The sequence spans 474 residues: Sestrin homolog (474 aa).

It belongs to the sestrin family.

The protein localises to the nucleus. The protein resides in the cytoplasm. May function as a negative feedback regulator of TOR function. In Caenorhabditis elegans, this protein is Sestrin homolog.